The primary structure comprises 299 residues: Oxygen-dependent coproporphyrinogen-III oxidase (299 aa).

Substrate is bound at residue S92. Residues H96 and H106 each coordinate a divalent metal cation. Catalysis depends on H106, which acts as the Proton donor. Residue 108–110 (NVR) coordinates substrate. A divalent metal cation contacts are provided by H145 and H175. The important for dimerization stretch occupies residues 239 to 274 (YVEFNLVYDRGTLFGLQSGGRAESILMSLPPRVRWE). 257–259 (GGR) is a substrate binding site.

It belongs to the aerobic coproporphyrinogen-III oxidase family. Homodimer. The cofactor is a divalent metal cation.

The protein resides in the cytoplasm. The enzyme catalyses coproporphyrinogen III + O2 + 2 H(+) = protoporphyrinogen IX + 2 CO2 + 2 H2O. It participates in porphyrin-containing compound metabolism; protoporphyrin-IX biosynthesis; protoporphyrinogen-IX from coproporphyrinogen-III (O2 route): step 1/1. Its function is as follows. Involved in the heme biosynthesis. Catalyzes the aerobic oxidative decarboxylation of propionate groups of rings A and B of coproporphyrinogen-III to yield the vinyl groups in protoporphyrinogen-IX. The polypeptide is Oxygen-dependent coproporphyrinogen-III oxidase (Xanthomonas oryzae pv. oryzae (strain MAFF 311018)).